The chain runs to 270 residues: MISKINFVKMHGLGNDFVIVNKRDLLSSYDLSQLAKNMADRHTGIGCDQFIIYEEHNDFYEMIIYNIDGSSAKLCGNATRCLAKLIYLDTGKKDITVMVCNKKLLCNVEDENNISVNVGSVSFNEAWMPSRDKIWELAERYMIDLKETICVDIGNPHLVIFSKLEPQDQKIVGEKLQAKELFADGVNVNFAEVKDNKIYLSVWERGVGFTLACGSGACGSFAAGLKLGFIHAPSMVVFKHGILTMKEENGNIIMQGSAKLVAQGEYYYEQ.

The substrate site is built by Asn15, Gln49, and Asn66. Catalysis depends on Cys75, which acts as the Proton donor. Substrate-binding positions include 76-77, Asn155, Asn187, and 204-205; these read GN and ER. The active-site Proton acceptor is the Cys213. Residue 214-215 coordinates substrate; sequence GS.

It belongs to the diaminopimelate epimerase family. As to quaternary structure, homodimer.

The protein localises to the cytoplasm. It catalyses the reaction (2S,6S)-2,6-diaminopimelate = meso-2,6-diaminopimelate. Its pathway is amino-acid biosynthesis; L-lysine biosynthesis via DAP pathway; DL-2,6-diaminopimelate from LL-2,6-diaminopimelate: step 1/1. In terms of biological role, catalyzes the stereoinversion of LL-2,6-diaminopimelate (L,L-DAP) to meso-diaminopimelate (meso-DAP), a precursor of L-lysine and an essential component of the bacterial peptidoglycan. This Rickettsia akari (strain Hartford) protein is Diaminopimelate epimerase.